Reading from the N-terminus, the 81-residue chain is MAHKKGQGSSRNGRDSNAQRRGVKKFGGEAVIAGNILVRQVGTKFHPGAGVGMGNDYTLFALVDGKVRFDREGRRVNIDVA.

The tract at residues 1–22 is disordered; sequence MAHKKGQGSSRNGRDSNAQRRG.

The protein belongs to the bacterial ribosomal protein bL27 family.

This is Large ribosomal subunit protein bL27 from Rhodopirellula baltica (strain DSM 10527 / NCIMB 13988 / SH1).